Consider the following 158-residue polypeptide: NAD(P)H-quinone oxidoreductase subunit J, chloroplastic (158 aa).

Belongs to the complex I 30 kDa subunit family. As to quaternary structure, NDH is composed of at least 16 different subunits, 5 of which are encoded in the nucleus.

The protein localises to the plastid. The protein resides in the chloroplast thylakoid membrane. The catalysed reaction is a plastoquinone + NADH + (n+1) H(+)(in) = a plastoquinol + NAD(+) + n H(+)(out). The enzyme catalyses a plastoquinone + NADPH + (n+1) H(+)(in) = a plastoquinol + NADP(+) + n H(+)(out). Its function is as follows. NDH shuttles electrons from NAD(P)H:plastoquinone, via FMN and iron-sulfur (Fe-S) centers, to quinones in the photosynthetic chain and possibly in a chloroplast respiratory chain. The immediate electron acceptor for the enzyme in this species is believed to be plastoquinone. Couples the redox reaction to proton translocation, and thus conserves the redox energy in a proton gradient. This Daucus carota (Wild carrot) protein is NAD(P)H-quinone oxidoreductase subunit J, chloroplastic.